Consider the following 311-residue polypeptide: MPKVRTKDIIEKFQLELVSGAEGIHRPITTSDLSRPGIEMAGYFTYYPAERIQLLGKTELSFYETLSLEEKKMRMERLCTDITPGIIISRGLEVPPELIEASERQSVPVMRSTMKTTRLSSRLTNYLESKLAPTTAVHGVLVDVYGVGVLITGKSGVGKSETALELVKRGHRLVADDCVEIRQEDEGVLVGSAPELIEHLLEIRGLGIINMMTLFGAGAVRTHKRISLVIDLELWDPNKQYDRLGLEEEKVKILDTELTKLTIPVRPGRNLAVIVEVAAMNFRLKRMGVNAAEEFSARLTDAIEDGEHDYE.

Residues His-138 and Lys-159 contribute to the active site. 153-160 (GKSGVGKS) provides a ligand contact to ATP. Ser-160 is a binding site for Mg(2+). Residue Asp-177 is the Proton acceptor; for phosphorylation activity. Proton donor; for dephosphorylation activity of the active site. Residues 201–210 (LEIRGLGIIN) form an important for the catalytic mechanism of both phosphorylation and dephosphorylation region. Position 202 (Glu-202) interacts with Mg(2+). The active site involves Arg-243. An important for the catalytic mechanism of dephosphorylation region spans residues 264–269 (PVRPGR).

Belongs to the HPrK/P family. As to quaternary structure, homohexamer. The cofactor is Mg(2+).

The catalysed reaction is [HPr protein]-L-serine + ATP = [HPr protein]-O-phospho-L-serine + ADP + H(+). The enzyme catalyses [HPr protein]-O-phospho-L-serine + phosphate + H(+) = [HPr protein]-L-serine + diphosphate. Catalyzes the ATP- as well as the pyrophosphate-dependent phosphorylation of a specific serine residue in HPr, a phosphocarrier protein of the phosphoenolpyruvate-dependent sugar phosphotransferase system (PTS). HprK/P also catalyzes the pyrophosphate-producing, inorganic phosphate-dependent dephosphorylation (phosphorolysis) of seryl-phosphorylated HPr (P-Ser-HPr). The two antagonistic activities of HprK/P are regulated by several intracellular metabolites, which change their concentration in response to the absence or presence of rapidly metabolisable carbon sources (glucose, fructose, etc.) in the growth medium. Also phosphorylates/dephosphorylates the HPr-like catabolite repression protein crh on a specific serine residue. Therefore, by controlling the phosphorylation state of HPr and crh, HPrK/P is a sensor enzyme that plays a major role in the regulation of carbon metabolism and sugar transport: it mediates carbon catabolite repression (CCR), and regulates PTS-catalyzed carbohydrate uptake and inducer exclusion. In Geobacillus sp. (strain WCH70), this protein is HPr kinase/phosphorylase.